The following is a 400-amino-acid chain: Enoyl-[acyl-carrier-protein] reductase [NADH] (400 aa).

NAD(+)-binding positions include 48–53 (GSSSGY), 74–75 (FE), 111–112 (DA), and 139–140 (LA). Tyr-225 serves as a coordination point for substrate. Residue Tyr-235 is the Proton donor of the active site. NAD(+) is bound by residues Lys-244 and 273 to 275 (VVT).

This sequence belongs to the TER reductase family. In terms of assembly, monomer.

The catalysed reaction is a 2,3-saturated acyl-[ACP] + NAD(+) = a (2E)-enoyl-[ACP] + NADH + H(+). It functions in the pathway lipid metabolism; fatty acid biosynthesis. Involved in the final reduction of the elongation cycle of fatty acid synthesis (FAS II). Catalyzes the reduction of a carbon-carbon double bond in an enoyl moiety that is covalently linked to an acyl carrier protein (ACP). The chain is Enoyl-[acyl-carrier-protein] reductase [NADH] from Shewanella loihica (strain ATCC BAA-1088 / PV-4).